The chain runs to 150 residues: UPF0756 membrane protein plu2726 (150 aa).

4 helical membrane passes run 8–28, 51–71, 88–108, and 123–143; these read LLVLLVLAALGIISHNMTVTL, YGLTIGVLILTVGVMAPIASG, LLAIVIGVLVSWLGSRGVSLM, and VLGVALFKGVPVGPLIAAGIL.

This sequence belongs to the UPF0756 family.

The protein localises to the cell membrane. This Photorhabdus laumondii subsp. laumondii (strain DSM 15139 / CIP 105565 / TT01) (Photorhabdus luminescens subsp. laumondii) protein is UPF0756 membrane protein plu2726.